The chain runs to 219 residues: RING-H2 finger protein ATL78 (219 aa).

A helical membrane pass occupies residues 57-77; that stretch reads VMVLSVLLCALVCSLGLNSII. The RING-type; atypical zinc-finger motif lies at 131 to 173; sequence CAICLSEFVAEERVKLLPTCHHGFHVRCIDKWLSSHSSCPTCR.

Belongs to the RING-type zinc finger family. ATL subfamily.

It is found in the membrane. It catalyses the reaction S-ubiquitinyl-[E2 ubiquitin-conjugating enzyme]-L-cysteine + [acceptor protein]-L-lysine = [E2 ubiquitin-conjugating enzyme]-L-cysteine + N(6)-ubiquitinyl-[acceptor protein]-L-lysine.. It functions in the pathway protein modification; protein ubiquitination. This is RING-H2 finger protein ATL78 (ATL78) from Arabidopsis thaliana (Mouse-ear cress).